We begin with the raw amino-acid sequence, 122 residues long: LYR motif-containing protein 1 (122 aa).

The protein belongs to the complex I LYR family.

Its function is as follows. May promote cell proliferation and inhibition of apoptosis of preadipocytes. The protein is LYR motif-containing protein 1 (Lyrm1) of Mus musculus (Mouse).